Here is a 504-residue protein sequence, read N- to C-terminus: Probable ergothioneine transporter EgtUBC (504 aa).

One can recognise an ABC transmembrane type-1 domain in the interval 19–198; sequence LVQHIQISFV…LLAILFDFLL (180 aa). A run of 6 helical transmembrane segments spans residues 25-44, 57-74, 81-97, 146-170, 179-198, and 210-229; these read ISFVSLFIAVLIALPLGIYL, VAAIFQTIPSLALLGLLI, IVPAIIALVIYALLPIL, MVLIIGTATLAALIGAGGLGDLILL, LILLGAIPAALLAILFDFLL, and IITISAGILLTAAIIVVPYF. The tract at residues 231-504 is ergothioneine binding domain; sequence SDKKEITIAG…DYLKDQGIIK (274 aa).

This sequence in the N-terminal section; belongs to the binding-protein-dependent transport system permease family. The protein in the C-terminal section; belongs to the OsmX family. The complex is probably composed of at least an ATP-binding protein (EgtUA) and a transmembrane protein (EgtUBC).

It is found in the membrane. Part of an ABC transporter complex EgtU required for the uptake of ergothioneine (EGT), a natural low-molecular weight (LMW) thiol antioxidant. Responsible for the translocation of the substrate across the membrane. Also contains a C-terminal periplasmic solute-binding domain (SBD) which binds to EGT with sub-micromolar affinity. Does not bind glycine betaine, carnitine, choline, proline, or cholate. Plays a role in bile acid tolerance. Dispensable for choline uptake. Probably not involved in betaine, carnitine or choline mediated osmo- or chill tolerance. Plays a role in enhancing virulence in mice. This is Probable ergothioneine transporter EgtUBC from Listeria monocytogenes serovar 1/2a (strain ATCC BAA-679 / EGD-e).